The following is a 387-amino-acid chain: MQVFWFIPTHGDSRYLGTSEGAREVSFDYLKQVAVAADTLGYEGVLIPTGRSCEDPWVAASALAAVTQRLKFLVAVRPGLMAPTLAARMAATFDRISNGRLLINLVTGGDTAELEGDGLFLDHTARYEASAEFLRIWRQVLAASHDGDKVDYEGKHLSVKGATVLYPPLQQPHPPVYFGGSSAPAHALAGEQVDTYLTWGEPPADVAQKLDDVRRQAARHGRTVKFGIRLHVIVRETEAAAWAAADDLISRLDDETVARAQAVFAKMDSEGQRRMAALHAGGARRTREALEISPNLWAGVGLVRGGAGTALVGDPHTVAERMREYAELGIDTFVLSGYPHLEEAYRFAELVFPLLPRSVRDKLPGKVLSGPFGEVMATGIVPRAAQS.

Belongs to the SsuD family.

It carries out the reaction an alkanesulfonate + FMNH2 + O2 = an aldehyde + FMN + sulfite + H2O + 2 H(+). Its function is as follows. Catalyzes the desulfonation of aliphatic sulfonates. The protein is Alkanesulfonate monooxygenase of Cupriavidus necator (strain ATCC 17699 / DSM 428 / KCTC 22496 / NCIMB 10442 / H16 / Stanier 337) (Ralstonia eutropha).